A 23-amino-acid chain; its full sequence is Hongotoxin-4 (23 aa).

Belongs to the short scorpion toxin superfamily. Potassium channel inhibitor family. Alpha-KTx 02 subfamily. As to expression, expressed by the venom gland.

The protein localises to the secreted. In terms of biological role, potent selective inhibitor of Kv1/KCNA voltage-gated potassium channels. This is Hongotoxin-4 from Centruroides limbatus (Bark scorpion).